The primary structure comprises 62 residues: Flavodoxin (62 aa).

The 59-residue stretch at 4-62 folds into the Flavodoxin-like domain; it reads IGIFFGTDTGKTRKIAKMIHKQLGELADAPVNINRTTLDDFMAYPVLLLGTPTLGDGQL.

Belongs to the flavodoxin family. Requires FMN as cofactor.

Functionally, low-potential electron donor to a number of redox enzymes. NifF is the electron donor to nitrogenase. The polypeptide is Flavodoxin (nifF) (Klebsiella oxytoca).